Consider the following 343-residue polypeptide: F17c-G fimbrial adhesin (343 aa).

An N-terminal signal peptide occupies residues 1–22 (MTNFYKVFLAVFILVCCNISHA). Residues 23–199 (AVSFIGSTEN…LNPFTLNDTV (177 aa)) are receptor-binding lectin domain. Residues 65–66 (AN), 110–111 (DT), and 138–141 (STQG) contribute to the a carbohydrate site. A disulfide bridge connects residues C75 and C132. Residues 200-343 (TSCRLLTPSA…GISTFTFSYQ (144 aa)) are fimbrillin-binding domain. The tract at residues 287–307 (LKFGPDSPVKGNENQWQLSTG) is disordered. Residues 298–307 (NENQWQLSTG) show a composition bias toward polar residues.

It belongs to the fimbrial protein family.

It is found in the fimbrium. In terms of biological role, essential fimbrial adhesion factor that mediates binding to N-acetylglucosamine-containing receptors in the host intestinal microvilli, leading to colonization of the intestinal tissue, and diarrhea or septicemia. Also confers adhesiveness to laminin and basement membranes. This chain is F17c-G fimbrial adhesin (f17cG), found in Escherichia coli.